The sequence spans 323 residues: Fructose-1,6-bisphosphatase class 1 (323 aa).

4 residues coordinate Mg(2+): E88, D107, L109, and D110. Substrate-binding positions include 110 to 113 (DGSS) and N200. E272 is a binding site for Mg(2+).

This sequence belongs to the FBPase class 1 family. Homotetramer. The cofactor is Mg(2+).

Its subcellular location is the cytoplasm. It carries out the reaction beta-D-fructose 1,6-bisphosphate + H2O = beta-D-fructose 6-phosphate + phosphate. The protein operates within carbohydrate biosynthesis; gluconeogenesis. This chain is Fructose-1,6-bisphosphatase class 1, found in Acinetobacter baumannii (strain ACICU).